Consider the following 94-residue polypeptide: MVYISNGQVLDSRSQSPWRLSLITDFFWGIAEFVVLFFKTLLQQDVKKRRSYGNSSDSRYDDGRGPPGNPPRRMGRINHLRGPSPPPMAGGUGR.

Residues 20–42 traverse the membrane as a helical segment; sequence LSLITDFFWGIAEFVVLFFKTLL. Residues 48–94 form a disordered region; that stretch reads KRRSYGNSSDSRYDDGRGPPGNPPRRMGRINHLRGPSPPPMAGGUGR. Residue U92 is a non-standard amino acid, selenocysteine.

It belongs to the selenoprotein K family. As to quaternary structure, interacts with DERL1, DERL2, DERL3 and SELENOS. The SELENOK-SELENOS complex interacts with VCP. Interacts with ZDHHC6. In terms of processing, cleaved by CAPN2/m-calpain in resting macrophages but not in activated macrophages. Macrophage activation up-regulates expression of the calpain inhibitor CAST/calpastatin, resulting in inhibition of CAPN2 activity. Post-translationally, truncated SELENOK proteins produced by failed UGA/Sec decoding are ubiquitinated by the CRL2(KLHDC2) complex, which recognizes the diglycine (Gly-Gly) at the C-terminus of truncated SELENOK proteins. Highly expressed in heart.

Its subcellular location is the endoplasmic reticulum membrane. The protein localises to the cell membrane. Functionally, required for Ca(2+) flux in immune cells and plays a role in T-cell proliferation and in T-cell and neutrophil migration. Involved in endoplasmic reticulum-associated degradation (ERAD) of soluble glycosylated proteins. Required for palmitoylation and cell surface expression of CD36 and involved in macrophage uptake of low-density lipoprotein and in foam cell formation. Together with ZDHHC6, required for palmitoylation of ITPR1 in immune cells, leading to regulate ITPR1 stability and function. Plays a role in protection of cells from ER stress-induced apoptosis. Protects cells from oxidative stress when overexpressed in cardiomyocytes. In Homo sapiens (Human), this protein is Selenoprotein K.